The primary structure comprises 205 residues: Transcriptional regulatory protein PdtaR (205 aa).

In terms of domain architecture, Response regulatory spans 15-129; the sequence is RVLIAEDEAL…DLIPAIELAV (115 aa). Position 65 is a 4-aspartylphosphate (Asp-65). The 62-residue stretch at 135 to 196 folds into the ANTAR domain; sequence ITALEGEVAT…TMKRVAEVVL (62 aa).

In terms of processing, phosphorylated and activated by PdtaS.

It localises to the cytoplasm. Its function is as follows. Member of the two-component regulatory system PdtaR/PdtaS. This two-component system plays an essential role in mycobacterial adaptation to poor nutrient conditions. PdtaR probably acts at the level of transcriptional antitermination rather than transcriptional initiation. In terms of biological role, in addition, the PdtaR/PdtaS two-component system controls copper and nitric oxide (NO) resistance downstream of the intramembrane protease Rip1. This coupled Rip1/PdtaS/PdtaR circuit controls NO resistance and acute lung infection in mice by relieving PdtaR/PdtaS-mediated repression of isonitrile chalkophore biosynthesis. Two signals are required to fully inactivate the PdtaR/PdtaS system and mediate NO resistance: a cytoplasmic inhibitory signal through the PdtaS kinase mediated by direct sensing of NO and the production of PPE1-5', an NO-induced small RNA, to sequester PdtaR. The chain is Transcriptional regulatory protein PdtaR (pdtaR) from Mycobacterium tuberculosis (strain CDC 1551 / Oshkosh).